The sequence spans 305 residues: UDP-3-O-acyl-N-acetylglucosamine deacetylase (305 aa).

Residues histidine 79, histidine 238, and aspartate 242 each coordinate Zn(2+). Residue histidine 265 is the Proton donor of the active site.

Belongs to the LpxC family. Zn(2+) serves as cofactor.

The enzyme catalyses a UDP-3-O-[(3R)-3-hydroxyacyl]-N-acetyl-alpha-D-glucosamine + H2O = a UDP-3-O-[(3R)-3-hydroxyacyl]-alpha-D-glucosamine + acetate. Its pathway is glycolipid biosynthesis; lipid IV(A) biosynthesis; lipid IV(A) from (3R)-3-hydroxytetradecanoyl-[acyl-carrier-protein] and UDP-N-acetyl-alpha-D-glucosamine: step 2/6. Functionally, catalyzes the hydrolysis of UDP-3-O-myristoyl-N-acetylglucosamine to form UDP-3-O-myristoylglucosamine and acetate, the committed step in lipid A biosynthesis. The protein is UDP-3-O-acyl-N-acetylglucosamine deacetylase of Vibrio campbellii (strain ATCC BAA-1116).